The sequence spans 354 residues: 3-dehydroquinate synthase (354 aa).

Residues 100-104 (GATGD), 124-125 (TT), Lys136, Lys145, and 163-166 (FLAT) each bind NAD(+). The Zn(2+) site is built by Glu178, His242, and His256.

This sequence belongs to the sugar phosphate cyclases superfamily. Dehydroquinate synthase family. Requires Co(2+) as cofactor. Zn(2+) is required as a cofactor. NAD(+) serves as cofactor.

The protein resides in the cytoplasm. The enzyme catalyses 7-phospho-2-dehydro-3-deoxy-D-arabino-heptonate = 3-dehydroquinate + phosphate. Its pathway is metabolic intermediate biosynthesis; chorismate biosynthesis; chorismate from D-erythrose 4-phosphate and phosphoenolpyruvate: step 2/7. Catalyzes the conversion of 3-deoxy-D-arabino-heptulosonate 7-phosphate (DAHP) to dehydroquinate (DHQ). In Staphylococcus haemolyticus (strain JCSC1435), this protein is 3-dehydroquinate synthase.